The chain runs to 383 residues: Mannan endo-1,4-beta-mannosidase A (383 aa).

The N-terminal stretch at 1-18 (MKFSQALLSLASLALAAA) is a signal peptide. Asn75 carries an N-linked (GlcNAc...) asparagine glycan. Trp97 is a binding site for substrate. Residue Asn199 is glycosylated (N-linked (GlcNAc...) asparagine). Residues Asn210 and 211 to 213 (EPR) each bind substrate. Catalysis depends on Glu211, which acts as the Proton donor/acceptor. Cys214 and Cys217 form a disulfide bridge. Substrate is bound by residues Tyr279 and Trp283. A disulfide bond links Cys301 and Cys308. Catalysis depends on Glu312, which acts as the Nucleophile. A disulfide bond links Cys320 and Cys369. Residue Asn332 is glycosylated (N-linked (GlcNAc...) asparagine). Residue Trp342 coordinates substrate.

Belongs to the glycosyl hydrolase 5 (cellulase A) family. In terms of assembly, monomer.

It localises to the secreted. It carries out the reaction Random hydrolysis of (1-&gt;4)-beta-D-mannosidic linkages in mannans, galactomannans and glucomannans.. Its function is as follows. Endo-1,4-mannanase that catalyzes the random hydrolysis of (1-&gt;4)-beta-D-mannosidic linkages in mannans and heteromannans. It is a crucial enzyme for depolymerization of seed galactomannans and wood galactoglucomannans. Active against locust bean gum and gum guar. Also has transglycosylation activity. The chain is Mannan endo-1,4-beta-mannosidase A (manA) from Emericella nidulans (strain FGSC A4 / ATCC 38163 / CBS 112.46 / NRRL 194 / M139) (Aspergillus nidulans).